The following is an 89-amino-acid chain: Small ribosomal subunit protein uS17 (89 aa).

Belongs to the universal ribosomal protein uS17 family. In terms of assembly, part of the 30S ribosomal subunit.

Functionally, one of the primary rRNA binding proteins, it binds specifically to the 5'-end of 16S ribosomal RNA. This chain is Small ribosomal subunit protein uS17, found in Chlorobaculum tepidum (strain ATCC 49652 / DSM 12025 / NBRC 103806 / TLS) (Chlorobium tepidum).